The chain runs to 471 residues: Glutamate--tRNA ligase (471 aa).

The short motif at 9–19 is the 'HIGH' region element; sequence PSPTGYLHVGG. 4 residues coordinate Zn(2+): C98, C100, C125, and H127. The 'KMSKS' region signature appears at 237–241; it reads KLSKR. K240 contributes to the ATP binding site.

Belongs to the class-I aminoacyl-tRNA synthetase family. Glutamate--tRNA ligase type 1 subfamily. Monomer. The cofactor is Zn(2+).

It is found in the cytoplasm. The enzyme catalyses tRNA(Glu) + L-glutamate + ATP = L-glutamyl-tRNA(Glu) + AMP + diphosphate. Its function is as follows. Catalyzes the attachment of glutamate to tRNA(Glu) in a two-step reaction: glutamate is first activated by ATP to form Glu-AMP and then transferred to the acceptor end of tRNA(Glu). The chain is Glutamate--tRNA ligase from Shigella boydii serotype 18 (strain CDC 3083-94 / BS512).